A 147-amino-acid polypeptide reads, in one-letter code: Acidic phospholipase A2 1 (147 aa).

A signal peptide spans 1-19; that stretch reads MNPAHLLVLAAVCVSLLGA. Positions 20–27 are excised as a propeptide; the sequence is AIVPPQPL. 7 disulfides stabilise this stretch: cysteine 38–cysteine 99, cysteine 54–cysteine 146, cysteine 56–cysteine 72, cysteine 71–cysteine 127, cysteine 78–cysteine 120, cysteine 88–cysteine 113, and cysteine 106–cysteine 118. Positions 55, 57, and 59 each coordinate Ca(2+). Histidine 75 is an active-site residue. Aspartate 76 is a Ca(2+) binding site. Aspartate 121 is an active-site residue.

The protein belongs to the phospholipase A2 family. Group I subfamily. D49 sub-subfamily. Ca(2+) is required as a cofactor. In terms of tissue distribution, expressed by the venom gland.

The protein localises to the secreted. It carries out the reaction a 1,2-diacyl-sn-glycero-3-phosphocholine + H2O = a 1-acyl-sn-glycero-3-phosphocholine + a fatty acid + H(+). Functionally, PLA2 catalyzes the calcium-dependent hydrolysis of the 2-acyl groups in 3-sn-phosphoglycerides. This is Acidic phospholipase A2 1 from Bungarus flaviceps flaviceps (Red-headed krait).